The sequence spans 118 residues: Small nuclear ribonucleoprotein Sm D2 (118 aa).

Residues 1-31 (MSLLNKPKSEMTPEELQKREEEEFNTGPLSV) form a disordered region. S2 bears the N-acetylserine mark. Glycyl lysine isopeptide (Lys-Gly) (interchain with G-Cter in SUMO2) cross-links involve residues K6 and K8. The segment covering 7-21 (PKSEMTPEELQKREE) has biased composition (basic and acidic residues). The residue at position 9 (S9) is a Phosphoserine. T12 bears the Phosphothreonine mark. Residues 29 to 115 (LSVLTQSVKN…VIVVLRNPLI (87 aa)) form the Sm domain.

This sequence belongs to the snRNP core protein family. Core component of the spliceosomal U1, U2, U4 and U5 small nuclear ribonucleoproteins (snRNPs), the building blocks of the spliceosome. Most spliceosomal snRNPs contain a common set of Sm proteins, SNRPB, SNRPD1, SNRPD2, SNRPD3, SNRPE, SNRPF and SNRPG that assemble in a heptameric protein ring on the Sm site of the small nuclear RNA to form the core snRNP. Component of the U1 snRNP. The U1 snRNP is composed of the U1 snRNA and the 7 core Sm proteins SNRPB, SNRPD1, SNRPD2, SNRPD3, SNRPE, SNRPF and SNRPG, and at least three U1 snRNP-specific proteins SNRNP70/U1-70K, SNRPA/U1-A and SNRPC/U1-C. Component of the U4/U6-U5 tri-snRNP complex composed of the U4, U6 and U5 snRNAs and at least PRPF3, PRPF4, PRPF6, PRPF8, PRPF31, SNRNP200, TXNL4A, SNRNP40, SNRPB, SNRPD1, SNRPD2, SNRPD3, SNRPE, SNRPF, SNRPG, DDX23, CD2BP2, PPIH, SNU13, EFTUD2, SART1 and USP39, plus LSM2, LSM3, LSM4, LSM5, LSM6, LSM7 and LSM8. Component of the minor spliceosome, which splices U12-type introns. Part of the SMN-Sm complex that contains SMN1, GEMIN2/SIP1, DDX20/GEMIN3, GEMIN4, GEMIN5, GEMIN6, GEMIN7, GEMIN8, STRAP/UNRIP and the Sm proteins SNRPB, SNRPD1, SNRPD2, SNRPD3, SNRPE, SNRPF and SNRPG; catalyzes core snRNPs assembly. Forms a 6S pICln-Sm complex composed of CLNS1A/pICln, SNRPD1, SNRPD2, SNRPE, SNRPF and SNRPG; ring-like structure where CLNS1A/pICln mimics additional Sm proteins and which is unable to assemble into the core snRNP. Interacts with SMN1; the interaction is direct. Interacts with GEMIN2; the interaction is direct. Interacts with SNRPD1; the interaction is direct. Interacts with SNRPF; the interaction is direct.

Its subcellular location is the cytoplasm. It localises to the cytosol. The protein localises to the nucleus. In terms of biological role, plays a role in pre-mRNA splicing as a core component of the spliceosomal U1, U2, U4 and U5 small nuclear ribonucleoproteins (snRNPs), the building blocks of the spliceosome. Component of both the pre-catalytic spliceosome B complex and activated spliceosome C complexes. As a component of the minor spliceosome, involved in the splicing of U12-type introns in pre-mRNAs. This Homo sapiens (Human) protein is Small nuclear ribonucleoprotein Sm D2 (SNRPD2).